The following is a 227-amino-acid chain: Terpene cyclase ltmB (227 aa).

7 helical membrane-spanning segments follow: residues 20–40, 51–71, 76–96, 113–133, 135–155, 173–195, and 206–226; these read LAETFVTFMGLGWLINYVLMI, MALIPLCNNIAWELVYTIIYP, VELAAFIAGVTLNFLIMTSAA, AGLIIVAGILMCFTGHVALAM, IGPALAYSWGAVICQLALSIG, LWSSRFLGSCCAVGFAFLRWRYW, and LILWSLATFLVADLTYGVCLL.

Belongs to the paxB family.

Its subcellular location is the membrane. The protein operates within secondary metabolite biosynthesis. Functionally, terpene cyclase; part of the gene cluster that mediates the biosynthesis of lolitrems, indole-diterpene mycotoxins that are potent tremorgens in mammals, and are synthesized by clavicipitaceous fungal endophytes in association with their grass hosts. The geranylgeranyl diphosphate (GGPP) synthase ltmG is proposed to catalyze the first step in lolitrem biosynthesis. LtmG catalyzes a series of iterative condensations of isopentenyl diphosphate (IPP) with dimethylallyl diphosphate (DMAPP), geranyl diphosphate (GPP), and farnesyl diphosphate (FPP), to form GGPP. GGPP then condenses with indole-3-glycerol phosphate to form 3-geranylgeranylindole, an acyclic intermediate, to be incorporated into paxilline. Either ltmG or ltmC could be responsible for this step, as both are putative prenyl transferases. The FAD-dependent monooxygenase ltmM then catalyzes the epoxidation of the two terminal alkenes of the geranylgeranyl moiety, which is subsequently cyclized by ltmB, to paspaline. The cytochrome P450 monooxygenases ltmQ and ltmP can sequentially oxidize paspaline to terpendole E and terpendole F. Alternatively, ltmP converts paspaline to an intermediate which is oxidized by ltmQ to terpendole F. LtmF, ltmK, ltmE and ltmJ appear to be unique to the epichloe endophytes. The prenyltransferase ltmF is involved in the 27-hydroxyl-O-prenylation. The cytochrome P450 monooxygenase ltmK is required for the oxidative acetal ring formation. The multi-functional prenyltransferase ltmE is required for C20- and C21-prenylations of the indole ring of paspalanes and acts together with the cytochrome P450 monooxygenase ltmJ to yield lolitremanes by multiple oxidations and ring closures. The stereoisomer pairs of lolitriol and lolitrem N or lolitrem B and lolitrem F may be attributed to variations in the way in which ring closure can occur under the action of ltmJ. While the major product of this pathway is lolitrem B, the prenyl transferases and cytochrome P450 monooxygenases identified in this pathway have a remarkable versatility in their regio- and stereo-specificities to generate a diverse range of metabolites that are products of a metabolic grid rather than a linear pathway. This is Terpene cyclase ltmB from Epichloe festucae var. lolii (Neotyphodium lolii).